The sequence spans 157 residues: Phosphopantetheine adenylyltransferase (157 aa).

Ser-9 is a binding site for substrate. ATP is bound by residues 9–10 (SF) and His-17. Residues Lys-41, Leu-73, and Lys-87 each contribute to the substrate site. ATP contacts are provided by residues 88 to 90 (GLR), Glu-98, and 123 to 129 (YSFLSSS).

Belongs to the bacterial CoaD family. Homohexamer. Mg(2+) is required as a cofactor.

The protein localises to the cytoplasm. The catalysed reaction is (R)-4'-phosphopantetheine + ATP + H(+) = 3'-dephospho-CoA + diphosphate. It functions in the pathway cofactor biosynthesis; coenzyme A biosynthesis; CoA from (R)-pantothenate: step 4/5. Its function is as follows. Reversibly transfers an adenylyl group from ATP to 4'-phosphopantetheine, yielding dephospho-CoA (dPCoA) and pyrophosphate. This chain is Phosphopantetheine adenylyltransferase, found in Alkaliphilus oremlandii (strain OhILAs) (Clostridium oremlandii (strain OhILAs)).